Here is a 261-residue protein sequence, read N- to C-terminus: Kallikrein 1-related peptidase b26 (261 aa).

Positions 1–18 (MWFLILFPALSLGGIDAA) are cleaved as a signal peptide. A propeptide spans 19-24 (PPLQSR) (activation peptide). Positions 25-258 (VVGGFNCEKN…FNSWIKDTMM (234 aa)) constitute a Peptidase S1 domain. Cystine bridges form between Cys-31–Cys-173, Cys-50–Cys-66, Cys-152–Cys-219, Cys-184–Cys-198, and Cys-209–Cys-234. His-65 functions as the Charge relay system in the catalytic mechanism. N-linked (GlcNAc...) asparagine glycosylation is present at Asn-102. Asp-120 (charge relay system) is an active-site residue. The Charge relay system role is filled by Ser-213.

The protein belongs to the peptidase S1 family. Kallikrein subfamily.

The enzyme catalyses Preferential cleavage of Arg-|-Xaa bonds in small molecule substrates. Highly selective action to release kallidin (lysyl-bradykinin) from kininogen involves hydrolysis of Met-|-Xaa or Leu-|-Xaa.. Functionally, glandular kallikreins cleave Met-Lys and Arg-Ser bonds in kininogen to release Lys-bradykinin. In terms of biological role, prorenin-converting enzyme cleaves mouse REN-2 prorenin at a dibasic site to yield mature renin. The polypeptide is Kallikrein 1-related peptidase b26 (Klk1b26) (Mus musculus (Mouse)).